A 466-amino-acid chain; its full sequence is Methylenetetrahydrofolate--tRNA-(uracil-5-)-methyltransferase TrmFO (466 aa).

FAD is bound at residue 14-19; that stretch reads GGGLAG.

It belongs to the MnmG family. TrmFO subfamily. FAD serves as cofactor.

Its subcellular location is the cytoplasm. It carries out the reaction uridine(54) in tRNA + (6R)-5,10-methylene-5,6,7,8-tetrahydrofolate + NADH + H(+) = 5-methyluridine(54) in tRNA + (6S)-5,6,7,8-tetrahydrofolate + NAD(+). It catalyses the reaction uridine(54) in tRNA + (6R)-5,10-methylene-5,6,7,8-tetrahydrofolate + NADPH + H(+) = 5-methyluridine(54) in tRNA + (6S)-5,6,7,8-tetrahydrofolate + NADP(+). Its function is as follows. Catalyzes the folate-dependent formation of 5-methyl-uridine at position 54 (M-5-U54) in all tRNAs. This is Methylenetetrahydrofolate--tRNA-(uracil-5-)-methyltransferase TrmFO from Brucella canis (strain ATCC 23365 / NCTC 10854 / RM-666).